The primary structure comprises 177 residues: Flavodoxin (177 aa).

The Flavodoxin-like domain maps to 4 to 173; it reads IGIFFGSDTG…RIDSWLEKLK (170 aa).

Belongs to the flavodoxin family. FMN serves as cofactor.

In terms of biological role, low-potential electron donor to a number of redox enzymes. NifF is the electron donor to nitrogenase. The polypeptide is Flavodoxin (nifF) (Enterobacter agglomerans (Erwinia herbicola)).